Consider the following 593-residue polypeptide: FAD-binding monooxygenase acrE (593 aa).

FAD is bound by residues 61–64 (TWRF), 73–74 (DS), and tyrosine 79. 71–73 (RVD) contributes to the NADP(+) binding site. Residues 200–206 (TGASGVQ) and 223–224 (RS) each bind NADP(+).

Belongs to the FAD-binding monooxygenase family. The cofactor is FAD.

Its pathway is secondary metabolite biosynthesis. In terms of biological role, FAD-binding monooxygenase; part of the cluster that mediates the biosynthesis of acurin A, a highly reduced polyketide coupled to a serine via a peptide bond. The activities of the highly reducing polyketide synthase acrA and the nonribosomal peptide synthetase acrB are collectively responsible for the synthesis of the acurin A core structure with a heptaketide backbone produced by acrA covalently fused to a L-serine by acrB. After the formation of the PK-NRP hybrid product, it is detached from acrB by reductive release to set up the formation of the lactam ring by aldol condensation. The hydrolyase acrC then catalyzes water loss to generate a double bond in the ring. This double bond is probably reduced, which is followed by three oxidations at C-22 to generate the carboxylic acid moiety, involving probably the FAD-binding monooxygenase acrE and the cytochrome P450 monooxygenases acrD and acrF. Finally, a last methylation step performed by the O-methyltransferase acrG leads to the production of acurin A. The sequence is that of FAD-binding monooxygenase acrE from Aspergillus aculeatus (strain ATCC 16872 / CBS 172.66 / WB 5094).